We begin with the raw amino-acid sequence, 450 residues long: Asparagine--tRNA ligase (450 aa).

This sequence belongs to the class-II aminoacyl-tRNA synthetase family. As to quaternary structure, homodimer.

The protein localises to the cytoplasm. The enzyme catalyses tRNA(Asn) + L-asparagine + ATP = L-asparaginyl-tRNA(Asn) + AMP + diphosphate + H(+). In Metamycoplasma arthritidis (strain 158L3-1) (Mycoplasma arthritidis), this protein is Asparagine--tRNA ligase.